The following is a 680-amino-acid chain: Zinc finger protein 263 (680 aa).

Residue Lys19 forms a Glycyl lysine isopeptide (Lys-Gly) (interchain with G-Cter in SUMO2) linkage. Residues 43–125 (HLRFRRFRFQ…TLVERMQKEL (83 aa)) enclose the SCAN box domain. Residues 147-191 (LPLETAGESPSFKLEPMETERSPGPRLQELLDPSPQRDSQAVKER) are disordered. A Glycyl lysine isopeptide (Lys-Gly) (interchain with G-Cter in SUMO2) cross-link involves residue Lys159. 2 positions are modified to phosphoserine: Ser168 and Ser180. Residues Lys286, Lys300, and Lys376 each participate in a glycyl lysine isopeptide (Lys-Gly) (interchain with G-Cter in SUMO2) cross-link. 5 consecutive C2H2-type zinc fingers follow at residues 378–400 (HLCALCGKNFSNNSNLIRHQRIH), 434–456 (HKCLECGKCFSQNTHLTRHQRTH), 462–484 (FQCNACGKSFSCNSNLNRHQRTH), 490–512 (YKCPECGEIFAHSSNLLRHQRIH), and 518–540 (YRCSECGKSFSRSSHLVIHERTH). Glycyl lysine isopeptide (Lys-Gly) (interchain with G-Cter in SUMO2) cross-links involve residues Lys570 and Lys579. 4 consecutive C2H2-type zinc fingers follow at residues 572-594 (FECSTCGKSFRQGMHLTRHQRTH), 600-622 (YKCILCGENFSHRSNLIRHQRIH), 628-650 (YTCHECGDSFSHSSNRIRHLRTH), and 656-678 (YKCSECGESFSRSSRLTSHQRTH).

The protein belongs to the krueppel C2H2-type zinc-finger protein family. As to quaternary structure, interacts with a number of proteins involved in chromatin modification and transcriptional corepression including DNMT1, DNMT3A, HDAC2, PHF8, TRIM28/KAP1, SETDB1, EZH2, UHRF1, CBX3/HP1-gamma, and CBX5/HP1-alpha; recruits these proteins to the SIX3 promoter region, leading to SIX3 transcriptional repression. Interacts with MAPK3/ERK1 and MAPK1/ERK2. Ubiquitinated, leading to proteasomal degradation. Expressed in Purkinje cells in the brain (at protein level).

It is found in the nucleus. Its function is as follows. Transcription factor that binds to the consensus sequence 5'-TCCTCCC-3' and acts as a transcriptional repressor. Binds to the promoter region of SIX3 and recruits other proteins involved in chromatin modification and transcriptional corepression, resulting in methylation of the promoter and transcriptional repression. Acts as a transcriptional repressor of HS3ST1 and HS3ST3A1 via binding to gene promoter regions. The chain is Zinc finger protein 263 from Mus musculus (Mouse).